Here is a 210-residue protein sequence, read N- to C-terminus: Small ribosomal subunit protein uS4 (210 aa).

The S4 RNA-binding domain occupies 99–161 (RRLDSVIYRM…SKNNATILSA (63 aa)).

This sequence belongs to the universal ribosomal protein uS4 family. As to quaternary structure, part of the 30S ribosomal subunit. Contacts protein S5. The interaction surface between S4 and S5 is involved in control of translational fidelity.

Its function is as follows. One of the primary rRNA binding proteins, it binds directly to 16S rRNA where it nucleates assembly of the body of the 30S subunit. In terms of biological role, with S5 and S12 plays an important role in translational accuracy. This is Small ribosomal subunit protein uS4 from Solibacter usitatus (strain Ellin6076).